Consider the following 458-residue polypeptide: tRNA-2-methylthio-N(6)-dimethylallyladenosine synthase (458 aa).

One can recognise an MTTase N-terminal domain in the interval 15 to 134; sequence KKVFIKTYGC…LPELLEKAKQ (120 aa). [4Fe-4S] cluster is bound by residues Cys-24, Cys-60, Cys-97, Cys-175, Cys-179, and Cys-182. The Radical SAM core domain maps to 161–395; the sequence is RKRGVSAFLT…LLLEQQNTFL (235 aa). The region spanning 396 to 457 is the TRAM domain; it reads RSKIGQKTDV…SNSFVGEMTN (62 aa).

This sequence belongs to the methylthiotransferase family. MiaB subfamily. In terms of assembly, monomer. The cofactor is [4Fe-4S] cluster.

It localises to the cytoplasm. It carries out the reaction N(6)-dimethylallyladenosine(37) in tRNA + (sulfur carrier)-SH + AH2 + 2 S-adenosyl-L-methionine = 2-methylsulfanyl-N(6)-dimethylallyladenosine(37) in tRNA + (sulfur carrier)-H + 5'-deoxyadenosine + L-methionine + A + S-adenosyl-L-homocysteine + 2 H(+). In terms of biological role, catalyzes the methylthiolation of N6-(dimethylallyl)adenosine (i(6)A), leading to the formation of 2-methylthio-N6-(dimethylallyl)adenosine (ms(2)i(6)A) at position 37 in tRNAs that read codons beginning with uridine. The sequence is that of tRNA-2-methylthio-N(6)-dimethylallyladenosine synthase from Bartonella tribocorum (strain CIP 105476 / IBS 506).